The sequence spans 141 residues: Hemoglobin subunit alpha (141 aa).

Residues 1–141 (VLSGTDKSNI…VSTVLTSKYR (141 aa)) form the Globin domain. Ser3 is subject to Phosphoserine. 2 positions are modified to N6-succinyllysine: Lys7 and Lys11. An N6-acetyllysine; alternate modification is found at Lys16. Position 16 is an N6-succinyllysine; alternate (Lys16). The residue at position 24 (Tyr24) is a Phosphotyrosine. A Phosphoserine modification is found at Ser35. Lys40 is modified (N6-succinyllysine). Position 49 is a phosphoserine (Ser49). An O2-binding site is contributed by His58. A heme b-binding site is contributed by His87. Residue Ser102 is modified to Phosphoserine. Thr108 bears the Phosphothreonine mark. Ser124 is modified (phosphoserine). Thr134 and Thr137 each carry phosphothreonine. Phosphoserine is present on Ser138.

Belongs to the globin family. In terms of assembly, heterotetramer of two alpha chains and two beta chains. In terms of tissue distribution, red blood cells.

Functionally, involved in oxygen transport from the lung to the various peripheral tissues. Hemopressin acts as an antagonist peptide of the cannabinoid receptor CNR1. Hemopressin-binding efficiently blocks cannabinoid receptor CNR1 and subsequent signaling. This is Hemoglobin subunit alpha (HBA) from Talpa europaea (European mole).